A 535-amino-acid chain; its full sequence is Heat shock factor protein 2 (535 aa).

Glycyl lysine isopeptide (Lys-Gly) (interchain with G-Cter in SUMO2) cross-links involve residues Lys-2, Lys-82, Lys-135, Lys-139, Lys-151, Lys-210, Lys-218, and Lys-237. The DNA-binding element occupies 7 to 112 (VPAFLSKLWT…LLENIKRKVS (106 aa)). Residues 119–192 (NKIRQEDLTK…VTLVQNNQLV (74 aa)) are hydrophobic repeat HR-A/B. The interval 298-325 (QSGEQSEPAREPLRVGSAGSSSPLMSSA) is disordered. The span at 313-325 (GSAGSSSPLMSSA) shows a compositional bias: low complexity. Positions 359-384 (LLDYLDSIDCSLEDFQAMLSGRQFSI) are hydrophobic repeat HR-C. The interval 418–437 (TKSSVVQHVSEEGRKSKSKP) is disordered. Basic and acidic residues predominate over residues 426–437 (VSEEGRKSKSKP).

The protein belongs to the HSF family. DNA-binding homotrimer in stressed or heat shocked cells, otherwise found as a homodimer. Isoform alpha is expressed predominantly in testis while isoform beta is expressed predominantly in heart and brain.

The protein localises to the cytoplasm. The protein resides in the nucleus. Functionally, DNA-binding protein that specifically binds heat shock promoter elements (HSE) and activates transcription. In higher eukaryotes, HSF is unable to bind to the HSE unless the cells are heat shocked. HSF2 is expressed in a form that binds DNA constitutively but loses DNA binding by incubation at greater than 41 degrees C. The protein is Heat shock factor protein 2 (Hsf2) of Mus musculus (Mouse).